The sequence spans 1347 residues: Spermatogenesis-associated protein 31A7 (1347 aa).

Residues 23–43 traverse the membrane as a helical segment; that stretch reads PWVLDIFLTLVFALGFFFLLL. 7 disordered regions span residues 55–88, 106–233, 374–397, 628–658, 900–955, 1084–1161, and 1313–1335; these read PSPS…RECP, GPHL…RDST, QDTT…GPQK, DESP…EAQK, RGIP…REAV, VHEE…PSVS, and KAVS…SHHH. Basic residues predominate over residues 60 to 82; it reads GKRKCPVGRRRRPRGRMKNHSLR. Polar residues predominate over residues 165–178; the sequence is LASTPSPGPMTTSV. Pro residues predominate over residues 198–211; the sequence is PEPPALFPHPPHTP. Composition is skewed to polar residues over residues 631–651 and 927–948; these read PGTS…STGE and LTYS…SSKA. 2 stretches are compositionally biased toward basic and acidic residues: residues 1108–1127 and 1137–1146; these read HKSE…RLEG and RKTEDTHQDE.

Belongs to the SPATA31 family.

The protein localises to the membrane. May play a role in spermatogenesis. In Homo sapiens (Human), this protein is Spermatogenesis-associated protein 31A7.